A 160-amino-acid polypeptide reads, in one-letter code: SsrA-binding protein (160 aa).

This sequence belongs to the SmpB family.

Its subcellular location is the cytoplasm. Required for rescue of stalled ribosomes mediated by trans-translation. Binds to transfer-messenger RNA (tmRNA), required for stable association of tmRNA with ribosomes. tmRNA and SmpB together mimic tRNA shape, replacing the anticodon stem-loop with SmpB. tmRNA is encoded by the ssrA gene; the 2 termini fold to resemble tRNA(Ala) and it encodes a 'tag peptide', a short internal open reading frame. During trans-translation Ala-aminoacylated tmRNA acts like a tRNA, entering the A-site of stalled ribosomes, displacing the stalled mRNA. The ribosome then switches to translate the ORF on the tmRNA; the nascent peptide is terminated with the 'tag peptide' encoded by the tmRNA and targeted for degradation. The ribosome is freed to recommence translation, which seems to be the essential function of trans-translation. In Salmonella agona (strain SL483), this protein is SsrA-binding protein.